The primary structure comprises 968 residues: Serine/threonine-protein kinase apg-1 (968 aa).

One can recognise a Protein kinase domain in the interval 24–329 (FVIDQEIGKG…FEDLFNHPVV (306 aa)). Residues 30-38 (IGKGSFAKV) and lysine 53 each bind ATP. Aspartate 167 acts as the Proton acceptor in catalysis. 4 disordered regions span residues 334 to 500 (PGLV…ERAA), 528 to 585 (MYPQ…LGTS), 884 to 906 (LPKR…LSDE), and 939 to 968 (ASKA…SVPA). 3 stretches are compositionally biased toward basic and acidic residues: residues 350–361 (LKEERPVSRAED), 371–380 (LRKDLADREG), and 417–431 (PRED…KEAA). 3 stretches are compositionally biased toward polar residues: residues 441–452 (VQPSTSAPTRPS), 528–538 (MYPQQPQSPKS), and 545–557 (ATQQ…TSGA).

It belongs to the protein kinase superfamily. Ser/Thr protein kinase family. APG1/unc-51/ULK1 subfamily. Homodimer. Forms a ternary complex with ATG13 and ATG17.

It is found in the cytoplasm. The protein localises to the preautophagosomal structure membrane. The enzyme catalyses L-seryl-[protein] + ATP = O-phospho-L-seryl-[protein] + ADP + H(+). The catalysed reaction is L-threonyl-[protein] + ATP = O-phospho-L-threonyl-[protein] + ADP + H(+). In terms of biological role, serine/threonine protein kinase involved in the cytoplasm to vacuole transport (Cvt) and found to be essential in autophagy, where it is required for the formation of autophagosomes. Involved in the clearance of protein aggregates which cannot be efficiently cleared by the proteasome. Required for selective autophagic degradation of the nucleus (nucleophagy) as well as for mitophagy which contributes to regulate mitochondrial quantity and quality by eliminating the mitochondria to a basal level to fulfill cellular energy requirements and preventing excess ROS production. Also involved in endoplasmic reticulum-specific autophagic process, in selective removal of ER-associated degradation (ERAD) substrates. Plays a key role in ATG9 and ATG23 cycling through the pre-autophagosomal structure and is necessary to promote ATG18 binding to ATG9 through phosphorylation of ATG9. Catalyzes phosphorylation of ATG4, decreasing the interaction between ATG4 and ATG8 and impairing deconjugation of PE-conjugated forms of ATG8. The chain is Serine/threonine-protein kinase apg-1 from Neurospora crassa (strain ATCC 24698 / 74-OR23-1A / CBS 708.71 / DSM 1257 / FGSC 987).